A 550-amino-acid polypeptide reads, in one-letter code: CTP synthase (550 aa).

The interval 1–270 (MTKYVFVTGG…DNIVCEALGL (270 aa)) is amidoligase domain. Serine 13 is a CTP binding site. Serine 13 serves as a coordination point for UTP. ATP-binding positions include 14–19 (SLGKGI) and aspartate 71. 2 residues coordinate Mg(2+): aspartate 71 and glutamate 144. CTP is bound by residues 151–153 (DIE), 191–196 (KTKPTQ), and lysine 227. Residues 191-196 (KTKPTQ) and lysine 227 contribute to the UTP site. Positions 295 to 545 (TIGMVGKYVD…IRAALEHKAQ (251 aa)) constitute a Glutamine amidotransferase type-1 domain. Glycine 356 provides a ligand contact to L-glutamine. The active-site Nucleophile; for glutamine hydrolysis is the cysteine 383. L-glutamine contacts are provided by residues 384–387 (LGMQ) and glutamate 407. The interval 430-459 (VERRDNSSDLGGTMRKGAQRCPIRPGTRAQ) is disordered. Arginine 473 is an L-glutamine binding site. Catalysis depends on residues histidine 518 and glutamate 520.

Belongs to the CTP synthase family. In terms of assembly, homotetramer.

It catalyses the reaction UTP + L-glutamine + ATP + H2O = CTP + L-glutamate + ADP + phosphate + 2 H(+). It carries out the reaction L-glutamine + H2O = L-glutamate + NH4(+). The enzyme catalyses UTP + NH4(+) + ATP = CTP + ADP + phosphate + 2 H(+). It participates in pyrimidine metabolism; CTP biosynthesis via de novo pathway; CTP from UDP: step 2/2. With respect to regulation, allosterically activated by GTP, when glutamine is the substrate; GTP has no effect on the reaction when ammonia is the substrate. The allosteric effector GTP functions by stabilizing the protein conformation that binds the tetrahedral intermediate(s) formed during glutamine hydrolysis. Inhibited by the product CTP, via allosteric rather than competitive inhibition. Its function is as follows. Catalyzes the ATP-dependent amination of UTP to CTP with either L-glutamine or ammonia as the source of nitrogen. Regulates intracellular CTP levels through interactions with the four ribonucleotide triphosphates. The protein is CTP synthase of Bordetella parapertussis (strain 12822 / ATCC BAA-587 / NCTC 13253).